Reading from the N-terminus, the 397-residue chain is Enoyl-[acyl-carrier-protein] reductase [NADH] (397 aa).

Residues 48–53 (GASTGY), 74–75 (FE), 111–112 (DA), and 139–140 (VA) contribute to the NAD(+) site. Substrate is bound at residue Tyr225. Tyr235 functions as the Proton donor in the catalytic mechanism. NAD(+) is bound by residues Lys244 and 273–275 (VVT).

It belongs to the TER reductase family. As to quaternary structure, monomer.

It carries out the reaction a 2,3-saturated acyl-[ACP] + NAD(+) = a (2E)-enoyl-[ACP] + NADH + H(+). Its pathway is lipid metabolism; fatty acid biosynthesis. Its function is as follows. Involved in the final reduction of the elongation cycle of fatty acid synthesis (FAS II). Catalyzes the reduction of a carbon-carbon double bond in an enoyl moiety that is covalently linked to an acyl carrier protein (ACP). This is Enoyl-[acyl-carrier-protein] reductase [NADH] from Burkholderia pseudomallei (strain 1106a).